The primary structure comprises 1325 residues: Nephrocystin-3 (1325 aa).

The disordered stretch occupies residues 1–20; sequence MGTASSLVSPTGGEVIEDTY. A lipid anchor (N-myristoyl glycine) is attached at Gly-2. Residues 107–203 are a coiled coil; that stretch reads SMGRREAKLD…QRLQAQGIQV (97 aa). TPR repeat units lie at residues 467 to 500, 881 to 914, 916 to 937, 938 to 971, 980 to 1013, 1022 to 1055, 1088 to 1121, 1130 to 1163, 1172 to 1205, 1214 to 1247, and 1256 to 1289; these read TPEE…AHEL, CLLN…KGAM, TEYF…MLCL, ADLY…RETA, AQSL…SENA, AREL…RQQA, ARTL…RERV, AQSL…RRRA, AYTV…RQKS, ATAL…YEDS, and GETL…KEAE. The disordered stretch occupies residues 1293-1325; sequence LGGKAPSRQSSSGDTFLFKTTHSPNVFLPQGQS. Over residues 1299–1325 the composition is skewed to polar residues; the sequence is SRQSSSGDTFLFKTTHSPNVFLPQGQS.

As to quaternary structure, interacts with NPHP1 and INVS/NPHP2. Interacts (when myristoylated) with UNC119 and UNC119B; interaction is required for localization to cilium. Interacts with CEP164. Component of a complex containing at least ANKS6, INVS, NEK8 and NPHP3. ANKS6 may organize complex assembly by linking INVS and NPHP3 to NEK8 and INVS may target the complex to the proximal ciliary axoneme.

The protein resides in the cell projection. The protein localises to the cilium. Its function is as follows. Required for normal ciliary development and function. Inhibits disheveled-1-induced canonical Wnt-signaling activity and may also play a role in the control of non-canonical Wnt signaling that regulates planar cell polarity. Probably acts as a molecular switch between different Wnt signaling pathways. Required for proper convergent extension cell movements. The protein is Nephrocystin-3 (Nphp3) of Mus musculus (Mouse).